A 518-amino-acid chain; its full sequence is Membrane-bound lytic murein transglycosylase F (518 aa).

The first 21 residues, 1 to 21 (MKKLKINYLFIGILALLLAVA), serve as a signal peptide directing secretion. Residues 22-269 (LWPSIPWFGK…RIEEKYLGHG (248 aa)) form a non-LT domain region. The tract at residues 270–518 (DDFDYVDTRT…SRKGSEEKQN (249 aa)) is LT domain. The active site involves glutamate 314.

In the N-terminal section; belongs to the bacterial solute-binding protein 3 family. This sequence in the C-terminal section; belongs to the transglycosylase Slt family.

Its subcellular location is the cell outer membrane. The enzyme catalyses Exolytic cleavage of the (1-&gt;4)-beta-glycosidic linkage between N-acetylmuramic acid (MurNAc) and N-acetylglucosamine (GlcNAc) residues in peptidoglycan, from either the reducing or the non-reducing ends of the peptidoglycan chains, with concomitant formation of a 1,6-anhydrobond in the MurNAc residue.. In terms of biological role, murein-degrading enzyme that degrades murein glycan strands and insoluble, high-molecular weight murein sacculi, with the concomitant formation of a 1,6-anhydromuramoyl product. Lytic transglycosylases (LTs) play an integral role in the metabolism of the peptidoglycan (PG) sacculus. Their lytic action creates space within the PG sacculus to allow for its expansion as well as for the insertion of various structures such as secretion systems and flagella. The sequence is that of Membrane-bound lytic murein transglycosylase F from Escherichia coli O157:H7.